A 627-amino-acid chain; its full sequence is MALNLRQKQTECVIRMLNLNQPLNPSGTANEEVYKILIYDRFCQNILSPLTHVKDLRKHGVTLFFLIDKDRQPVHDVPAVYFVQPTESNLQRIIADASRSLYDTFHLNFSSSIPRKFLEELASGTLKSGSVEKVSKVHDQYLEFVTLEDNLFSLAQQSTYVQMNDPSAGEKEINEIIERVASGLFCVLVTLGVVPVIRCPSGGPAEMVASLLDQKLRDHLLSKNNLFTEGGGFMSSFQRPLLCIFDRNFELSVGIQHDFRYRPLVHDVLGLKLNQLKVQGEKGPPKSFELDSSDPFWSANSTLEFPDVAVEIETQLNKYKRDVEEVNKKTGGGSGAEFDGTDLIGNIHTEHLMNTVKSLPELTERKKVIDKHTNIATALLGQIKERSIDAFTKKESDMMMRGGIDRTELMAALKGKGTKMDKLRFAIMYLISTETINQSEVEAVEAALNEAEADTSAFQYVKKIKSLNASFAATSANSASRSNIVDWAEKLYGQSISAVTAGVKNLLSSDQQLAVTRTVEALTEGKPNPEIDSYRFLDPRAPKSSSSGGSHVKGPFREAIVFMIGGGNYVEYGSLQELTQRQLTVKNVIYGATEILNGGELVEQLGLLGKKMGLGGPVASTSLSGGH.

Residues 526-551 (KPNPEIDSYRFLDPRAPKSSSSGGSH) form a disordered region. Basic and acidic residues predominate over residues 527 to 541 (PNPEIDSYRFLDPRA).

This sequence belongs to the STXBP/unc-18/SEC1 family.

May be involved in the early secretory pathway. This Arabidopsis thaliana (Mouse-ear cress) protein is SEC1 family transport protein SLY1 (SLY1).